The chain runs to 263 residues: Putative SNAP25 homologous protein SNAP30 (263 aa).

2 disordered regions span residues 1–61 (MFGF…LQSQ) and 132–209 (NLGG…DGLS). Composition is skewed to polar residues over residues 8 to 34 (PGNNKLPNESSNNKGGTITAGRRTSSE) and 52 to 61 (FNDSGGLQSQ). Positions 158 to 173 (KPSKKSENHKEEREKL) are enriched in basic and acidic residues. Residues 180-194 (RSSSQPALDQPTNAL) show a composition bias toward polar residues. The span at 197–206 (VEQEKAKQDD) shows a compositional bias: basic and acidic residues. Residues 198-260 (EQEKAKQDDG…QGANQRARHL (63 aa)) enclose the t-SNARE coiled-coil homology domain.

It belongs to the SNAP-25 family.

The protein localises to the membrane. Its subcellular location is the cytoplasm. Vesicle trafficking protein that functions in the secretory pathway. The protein is Putative SNAP25 homologous protein SNAP30 (SNAP30) of Arabidopsis thaliana (Mouse-ear cress).